The following is a 206-amino-acid chain: Cytochrome c biogenesis ATP-binding export protein CcmA (206 aa).

Residues 2-206 (LEARDVVCIR…IQLTPSEGTP (205 aa)) enclose the ABC transporter domain. Residue 34 to 41 (GANGVGKT) participates in ATP binding.

This sequence belongs to the ABC transporter superfamily. CcmA exporter (TC 3.A.1.107) family. In terms of assembly, the complex is composed of two ATP-binding proteins (CcmA) and two transmembrane proteins (CcmB).

It is found in the cell inner membrane. The enzyme catalyses heme b(in) + ATP + H2O = heme b(out) + ADP + phosphate + H(+). Part of the ABC transporter complex CcmAB involved in the biogenesis of c-type cytochromes; once thought to export heme, this seems not to be the case, but its exact role is uncertain. Responsible for energy coupling to the transport system. This chain is Cytochrome c biogenesis ATP-binding export protein CcmA, found in Pectobacterium atrosepticum (strain SCRI 1043 / ATCC BAA-672) (Erwinia carotovora subsp. atroseptica).